The chain runs to 290 residues: uncharacterized protein (290 aa).

It is found in the cell membrane. It localises to the membrane raft. This is an uncharacterized protein from Bacillus subtilis (strain 168).